The primary structure comprises 1118 residues: Pleckstrin homology domain-containing family A member 7 (1118 aa).

WW domains lie at 8 to 41 and 53 to 86; these read DTLPEHWSYGVCRDGRVFFINDQLRCTTWLHPRT and SDLPRGWEEGFTEEGASFFIDHNQQTTTFRHPVT. A compositionally biased stretch (basic and acidic residues) spans 100 to 113; that stretch reads EEPHPHMSKPERNQ. Positions 100-145 are disordered; sequence EEPHPHMSKPERNQRPSSMVSETSTAGTTSTLEAKPGPKIVKSSSK. Over residues 114–131 the composition is skewed to polar residues; sequence RPSSMVSETSTAGTTSTL. The region spanning 163 to 281 is the PH domain; the sequence is PVVVRGWLHK…WVRAMNQAAQ (119 aa). Basic and acidic residues-rich tracts occupy residues 334-355 and 434-443; these read FNRREQEEERFRAQRDPLEGRR and HWTKAQKGDG. Disordered regions lie at residues 334–512 and 528–629; these read FNRR…RRAH and QFRH…RRSM. Over residues 452-481 the composition is skewed to polar residues; sequence LPRQGPSQPLSFPENYQSLPKSTRHLSGSS. A compositionally biased stretch (basic and acidic residues) spans 494–512; the sequence is YAQDRASHLKMSSEERRAH. S533, S542, S566, S601, S605, and S609 each carry phosphoserine. The interval 535-693 is interaction with CTNND1; it reads TAPIGAGSPE…AESDIDVKLS (159 aa). Positions 564 to 579 are enriched in pro residues; it reads PPSPSDIPPPGPPRPF. Positions 586-602 are enriched in basic and acidic residues; it reads TPAERVTVKPPEQRRSV. Residues 697–798 are a coiled coil; the sequence is EQDRILQDLE…LQEQHRRAFF (102 aa). Disordered stretches follow at residues 839–873 and 886–968; these read KTVPLFPHPSVPSLSPTESKPALQPSPPTSPVRTP and VPYR…EQGQ. S857 and S864 each carry phosphoserine. At T867 the chain carries Phosphothreonine. Phosphoserine occurs at positions 868, 900, and 904. Over residues 930 to 939 the composition is skewed to pro residues; that stretch reads DQPPAVPPLP. Residues 955-966 show a composition bias toward basic and acidic residues; that stretch reads RQSDERKRDREQ. A phosphoserine mark is found at S983 and L990. The segment at 1003 to 1024 is disordered; it reads GSESRYQTLPGRGLSGSTSRLQ. Residues 1064–1091 are a coiled coil; sequence QRGKMSAEEQLERMKRHQKALVRERKRT.

In terms of assembly, interacts with CAMSAP3 and CTNND1. Interacts (via WW domains) with TSPAN33 (via cytoplasmic domain) and with PDZD11; the interaction with TSPAN33 is dependent on PDZD11 being bound to PLEKHA7 and facilitates the docking of ADAM10 to zonula adherens through interaction of TSPAN33 with ADAM10. In terms of tissue distribution, expressed in kidney and lung (at protein level).

The protein localises to the cell junction. It is found in the adherens junction. Its subcellular location is the cytoplasm. The protein resides in the cytoskeleton. It localises to the microtubule organizing center. The protein localises to the centrosome. Required for zonula adherens biogenesis and maintenance. Acts via its interaction with CAMSAP3, which anchors microtubules at their minus-ends to zonula adherens, leading to the recruitment of KIFC3 kinesin to the junctional site. Mediates docking of ADAM10 to zonula adherens through a PDZD11-dependent interaction with the ADAM10-binding protein TSPAN33. This Mus musculus (Mouse) protein is Pleckstrin homology domain-containing family A member 7 (Plekha7).